We begin with the raw amino-acid sequence, 403 residues long: S-adenosylmethionine synthase (403 aa).

An ATP-binding site is contributed by His17. Asp19 serves as a coordination point for Mg(2+). Residue Glu45 coordinates K(+). The L-methionine site is built by Glu58 and Gln104. The tract at residues 104-114 (QSPDIAQGVDT) is flexible loop. ATP-binding positions include 179 to 181 (DGK), 250 to 251 (KF), Asp259, 265 to 266 (RK), Ala282, and Lys286. Asp259 lines the L-methionine pocket. Lys290 provides a ligand contact to L-methionine.

Belongs to the AdoMet synthase family. Homotetramer; dimer of dimers. Requires Mg(2+) as cofactor. The cofactor is K(+).

The protein localises to the cytoplasm. The enzyme catalyses L-methionine + ATP + H2O = S-adenosyl-L-methionine + phosphate + diphosphate. It participates in amino-acid biosynthesis; S-adenosyl-L-methionine biosynthesis; S-adenosyl-L-methionine from L-methionine: step 1/1. Its function is as follows. Catalyzes the formation of S-adenosylmethionine (AdoMet) from methionine and ATP. The overall synthetic reaction is composed of two sequential steps, AdoMet formation and the subsequent tripolyphosphate hydrolysis which occurs prior to release of AdoMet from the enzyme. The sequence is that of S-adenosylmethionine synthase from Mycolicibacterium paratuberculosis (strain ATCC BAA-968 / K-10) (Mycobacterium paratuberculosis).